A 563-amino-acid chain; its full sequence is MTKFVFVTGGVVSSLGKGIAAASLAAILESRGLKVTLIKLDPYLNVDPGTMSPFQHGEVFVTEDGAETDLDLGHYERFITTRMKRSNNFTSGQIYKNVLEKERRGDYLGKTVQVIPHVTNEIQEFVKRGAGIGSHSGDDAKFGVGEPVDVAIVEIGGTVGDIESLPFLEAVRQLSLKMGPTNTAFVHLTYVPFIAAAGELKTKPTQHTVQKMREIGIQPDVLLCRADRPIPDEEREKISLFTNVALHGVISVWDADTIYKVPRMLHEQGLDEMICMKLQLLTKPANLSRWDRLVKEVEHPRREITIAMAGKYTELSDSYKSLNEALRHAGIQHHAKVNIEYVDSETLTPETAGELSKFDAILVPGGFGKRGIEGKIVAAQYAREHGIPYLGICLGMQVATIEYARHKAGLAGANSTEFEPDGPHPVIALIDEWQDADGSIQKRDANSDLGGTMRLGAQSSDVKAGTLAHEIYGDVVTERHRHRYEANQKYLQRLQDAGLVISAITQREKLTEMVELPRSVHPWYVGVQFHPEFKSTPWDGHPLFSSYIAAALEHHAALQKEAA.

Residues 1-280 (MTKFVFVTGG…DEMICMKLQL (280 aa)) are amidoligase domain. Residue S13 coordinates CTP. S13 is a binding site for UTP. ATP is bound by residues 14-19 (SLGKGI) and D71. The Mg(2+) site is built by D71 and E154. Residues 161-163 (DIE), 201-206 (KTKPTQ), and K237 each bind CTP. Residues 201–206 (KTKPTQ) and K237 contribute to the UTP site. The 253-residue stretch at 305–557 (TIAMAGKYTE…IAAALEHHAA (253 aa)) folds into the Glutamine amidotransferase type-1 domain. G366 lines the L-glutamine pocket. Residue C393 is the Nucleophile; for glutamine hydrolysis of the active site. Residues 394-397 (LGMQ), E417, and R483 each bind L-glutamine. Catalysis depends on residues H530 and E532.

Belongs to the CTP synthase family. In terms of assembly, homotetramer.

It carries out the reaction UTP + L-glutamine + ATP + H2O = CTP + L-glutamate + ADP + phosphate + 2 H(+). The catalysed reaction is L-glutamine + H2O = L-glutamate + NH4(+). The enzyme catalyses UTP + NH4(+) + ATP = CTP + ADP + phosphate + 2 H(+). Its pathway is pyrimidine metabolism; CTP biosynthesis via de novo pathway; CTP from UDP: step 2/2. Its activity is regulated as follows. Allosterically activated by GTP, when glutamine is the substrate; GTP has no effect on the reaction when ammonia is the substrate. The allosteric effector GTP functions by stabilizing the protein conformation that binds the tetrahedral intermediate(s) formed during glutamine hydrolysis. Inhibited by the product CTP, via allosteric rather than competitive inhibition. In terms of biological role, catalyzes the ATP-dependent amination of UTP to CTP with either L-glutamine or ammonia as the source of nitrogen. Regulates intracellular CTP levels through interactions with the four ribonucleotide triphosphates. This Leptothrix cholodnii (strain ATCC 51168 / LMG 8142 / SP-6) (Leptothrix discophora (strain SP-6)) protein is CTP synthase.